A 355-amino-acid chain; its full sequence is NADH-quinone oxidoreductase subunit H (355 aa).

Transmembrane regions (helical) follow at residues 17–37 (IIMV…IAYI), 86–106 (GVFL…WAVI), 119–139 (VGIL…IMAG), 165–185 (IGFV…SAVV), 204–224 (ILNW…VSAL), 262–282 (YVAI…GWLP), 291–311 (WVPG…LFAM), and 332–352 (FLPL…FAGI).

This sequence belongs to the complex I subunit 1 family. In terms of assembly, NDH-1 is composed of 14 different subunits. Subunits NuoA, H, J, K, L, M, N constitute the membrane sector of the complex.

The protein resides in the cell inner membrane. It carries out the reaction a quinone + NADH + 5 H(+)(in) = a quinol + NAD(+) + 4 H(+)(out). In terms of biological role, NDH-1 shuttles electrons from NADH, via FMN and iron-sulfur (Fe-S) centers, to quinones in the respiratory chain. The immediate electron acceptor for the enzyme in this species is believed to be ubiquinone. Couples the redox reaction to proton translocation (for every two electrons transferred, four hydrogen ions are translocated across the cytoplasmic membrane), and thus conserves the redox energy in a proton gradient. This subunit may bind ubiquinone. This chain is NADH-quinone oxidoreductase subunit H, found in Bradyrhizobium diazoefficiens (strain JCM 10833 / BCRC 13528 / IAM 13628 / NBRC 14792 / USDA 110).